Consider the following 538-residue polypeptide: Reticuline oxidase (538 aa).

An N-terminal signal peptide occupies residues 1–23 (MENKTPIFFSLSIFLSLLNCALG). Cysteines 30 and 89 form a disulfide. An N-linked (GlcNAc...) asparagine glycan is attached at Asn38. In terms of domain architecture, FAD-binding PCMH-type spans 67–241 (LISKPSAIIL…YAWKIKLLPV (175 aa)). Positions 104–166 (HSYEGLSYTS…SKLGFTAGWC (63 aa)) form a cross-link, 6-(S-cysteinyl)-8alpha-(pros-histidyl)-FAD (His-Cys). Asn423 and Asn471 each carry an N-linked (GlcNAc...) asparagine glycan.

The protein belongs to the oxygen-dependent FAD-linked oxidoreductase family. It depends on FAD as a cofactor. A metal cation serves as cofactor. The FAD cofactor is bound via a bicovalent 6-S-cysteinyl, 8alpha-N1-histidyl FAD linkage.

It localises to the cytoplasmic vesicle. The enzyme catalyses (S)-reticuline + O2 = (S)-scoulerine + H2O2 + H(+). It functions in the pathway alkaloid biosynthesis; (S)-scoulerine biosynthesis; (S)-scoulerine from (S)-reticuline: step 1/1. Its function is as follows. Essential to the formation of benzophenanthridine alkaloids in the response of plants to pathogenic attack. Catalyzes the stereospecific conversion of the N-methyl moiety of (S)-reticuline into the berberine bridge carbon of (S)-scoulerine. This is Reticuline oxidase (BBE1) from Eschscholzia californica (California poppy).